A 97-amino-acid polypeptide reads, in one-letter code: Large ribosomal subunit protein uL23 (97 aa).

This sequence belongs to the universal ribosomal protein uL23 family. As to quaternary structure, part of the 50S ribosomal subunit. Contacts protein L29, and trigger factor when it is bound to the ribosome.

Its function is as follows. One of the early assembly proteins it binds 23S rRNA. One of the proteins that surrounds the polypeptide exit tunnel on the outside of the ribosome. Forms the main docking site for trigger factor binding to the ribosome. This is Large ribosomal subunit protein uL23 from Sulfurihydrogenibium sp. (strain YO3AOP1).